The primary structure comprises 180 residues: Cytokinin-beta-glucosidase 2 (180 aa).

Functionally, hydrolyzes cytokinin glucosides thus liberating free cytokinins. The sequence is that of Cytokinin-beta-glucosidase 2 (ROLC2) from Panax ginseng (Korean ginseng).